A 745-amino-acid chain; its full sequence is Junction plakoglobin (745 aa).

Position 1 is an N-acetylmethionine (Met1). Thr14 carries O-linked (GlcNAc) threonine glycosylation. Residues Ser99 and Ser125 each carry the phosphoserine modification. ARM repeat units lie at residues Asn132–Lys171, Lys172–His215, Arg216–Leu255, Glu258–Tyr297, Gly298–Cys341, Pro342–Asp381, Ala383–Cys420, Ser423–Ser464, Glu470–Leu510, Pro512–Thr551, Pro574–Gln613, and Lys615–Arg661. Residues Asn132–Tyr297 form an interaction with DSC1 and DSG1 region. Ser182 is subject to Phosphoserine. Residues Pro574–Arg661 are interaction with DSC1. Phosphoserine occurs at positions 665 and 730.

This sequence belongs to the beta-catenin family. In terms of assembly, homodimer. Component of an E-cadherin/catenin adhesion complex composed of at least E-cadherin/CDH1 and gamma-catenin/JUP, and possibly alpha-catenin/CTNNA1; the complex is located to adherens junctions. The stable association of CTNNA1 is controversial as CTNNA1 was shown not to bind to F-actin when assembled in the complex. Interacts with MUC1. Interacts with CAV1. Interacts with PTPRJ. Interacts with DSG1. Interacts with DSC1 and DSC2. Interacts with PKP2. Interacts with PKP3 (via N-terminus); the interaction is required for PKP3 localization to desmosome cell-cell junctions. Interacts with DSG4. Post-translationally, may be phosphorylated by FER.

The protein resides in the cell junction. It is found in the adherens junction. It localises to the desmosome. Its subcellular location is the cytoplasm. The protein localises to the cytoskeleton. The protein resides in the cell membrane. It is found in the nucleus. In terms of biological role, common junctional plaque protein. The membrane-associated plaques are architectural elements in an important strategic position to influence the arrangement and function of both the cytoskeleton and the cells within the tissue. The presence of plakoglobin in both the desmosomes and in the intermediate junctions suggests that it plays a central role in the structure and function of submembranous plaques. Acts as a substrate for VE-PTP and is required by it to stimulate VE-cadherin function in endothelial cells. Can replace beta-catenin in E-cadherin/catenin adhesion complexes which are proposed to couple cadherins to the actin cytoskeleton. The sequence is that of Junction plakoglobin from Sus scrofa (Pig).